The chain runs to 221 residues: tRNA (guanine-N(7)-)-methyltransferase (221 aa).

S-adenosyl-L-methionine-binding residues include glutamate 51, glutamate 76, aspartate 103, and aspartate 125. Aspartate 125 is an active-site residue. Residues lysine 129 and aspartate 161 each coordinate substrate.

The protein belongs to the class I-like SAM-binding methyltransferase superfamily. TrmB family.

The catalysed reaction is guanosine(46) in tRNA + S-adenosyl-L-methionine = N(7)-methylguanosine(46) in tRNA + S-adenosyl-L-homocysteine. It functions in the pathway tRNA modification; N(7)-methylguanine-tRNA biosynthesis. In terms of biological role, catalyzes the formation of N(7)-methylguanine at position 46 (m7G46) in tRNA. The protein is tRNA (guanine-N(7)-)-methyltransferase of Wolbachia pipientis wMel.